The following is a 1379-amino-acid chain: Partitioning defective protein 3 (1379 aa).

The segment covering M1–C23 has biased composition (low complexity). Disordered stretches follow at residues M1 to T32 and Y208 to K335. 2 stretches are compositionally biased toward polar residues: residues S239–S256 and I272–S284. Basic and acidic residues-rich tracts occupy residues E302–S315 and D322–K335. 2 PDZ domains span residues L381–R483 and V515–S599. Residues T606 to K626 adopt a coiled-coil conformation. Residues V659–R750 form the PDZ 3 domain. Disordered regions lie at residues D767–A873, H887–M918, Q949–V1085, V1273–S1301, and A1350–Y1379. 2 stretches are compositionally biased toward low complexity: residues S776–S786 and A798–A826. Basic and acidic residues-rich tracts occupy residues L828 to E844 and F854 to G869. A compositionally biased stretch (low complexity) spans P894–R912. Over residues Q967 to Q977 the composition is skewed to polar residues. 2 stretches are compositionally biased toward basic and acidic residues: residues K1030 to P1040 and S1048 to N1060. The span at S1290–S1301 shows a compositional bias: low complexity.

This sequence belongs to the PAR3 family. In terms of assembly, required, together with pkc-3, for the localization of par-6; par-6 is involved in localizing/maintaining par-3 at the cell periphery. Interacts with par-6 and pkc-3 for localization at the periphery of anterior cortex of the embryo. As to expression, asymmetrically distributed at the periphery of the zygote and in dividing blastomeres of the germline lineage. Coexpressed with par-6; patchy expression observed at the periphery after completion of meiosis I and in meiosis II. On completion of metaphase II, expression is restricted to the anterior 85% of embryo length; this decreases to 55% in embryos between prophase and telophase of the first mitosis. During the first cleavage, expression is detected in the advancing furrow. Transiently coexpressed and colocalized asymmetrically with par-6 and pkc-3, in the developing somatic gonad, including the spermathecal precursor cells of L4 larvae.

The protein resides in the cytoplasm. In terms of biological role, in cooperation with pkc-3, required for establishing cell polarity and regulating spindle orientation in the early embryo. Localization is crucial for recruiting par-6 and pkc-3 to the peripheral apical cortex and restricting par-2 to basolateral surfaces. Necessary for apicobasal and anterior-posterior asymmetries associated with cell adhesion and gastrulation during the first few cycles of embryogenesis, and also for epithelial cell polarity in the distal spermatheca. Regulates the asymmetric localization of csnk-1, ppk-1 and gpr-1/2 during the first embryonic division. The chain is Partitioning defective protein 3 from Caenorhabditis elegans.